The following is a 62-amino-acid chain: Alpha-elapitoxin-Nn2a (62 aa).

Positions 1 to 20 (LECHNQQSSQTPTTTDCSGG) are disordered. 4 disulfides stabilise this stretch: Cys-3–Cys-24, Cys-17–Cys-41, Cys-43–Cys-54, and Cys-55–Cys-60.

This sequence belongs to the three-finger toxin family. Short-chain subfamily. Type I alpha-neurotoxin sub-subfamily. As to expression, expressed by the venom gland.

It localises to the secreted. In terms of biological role, nicotinic acetylcholine receptor antagonist. Binds to muscle nicotinic acetylcholine receptor (nAChR) and inhibits acetylcholine from binding to the receptor, thereby impairing neuromuscular transmission. Produces peripheral paralysis by blocking neuromuscular transmission at the postsynaptic site. Induces concentration-dependent inhibition of indirect twitches and abolishes contractile responses of tissues to exogenous acetylcholine and carbachol, in the chick biventer cervicis nerve-muscle preparation at 100-300 nM (in vitro). Prior incubation of tissues with Indian polyvalent antivenom (1 ml/0.6 mg) prevents the neurotoxic effects at 100 nM (in vitro). Addition of Indian polyvalent antivenom (1 ml/0.6 mg) at the t90 time point does not reverse the neurotoxic effects (in vitro). Displays non-competitive antagonism of concentration-response curves to carbachol, with a pA2 of 8.01 (in vitro). This chain is Alpha-elapitoxin-Nn2a, found in Naja naja (Indian cobra).